The sequence spans 282 residues: Armadillo repeat-containing protein 1 (282 aa).

An N-acetylmethionine modification is found at Met-1. The ARM repeat unit spans residues 39–81 (GCLPGLILSMDHPNPPVVHSALLALRYLAECRANREKMKGELG). At Thr-137 the chain carries Phosphothreonine. Phosphoserine is present on residues Ser-189, Ser-246, Ser-260, and Ser-267. A disordered region spans residues 239–261 (DYLPEDESPTKEQDKAVSRVGSH). Over residues 246–255 (SPTKEQDKAV) the composition is skewed to basic and acidic residues.

In terms of assembly, interacts with mitochondrial contact site and cristae organizing system (MICOS) complex components IMMT/MIC60 and MICOS10/MIC10. Interacts with mitochondrial outer membrane sorting assembly machinery (SAM) complex components SAMM50 and MTX1.

It is found in the cytoplasm. Its subcellular location is the mitochondrion. It localises to the mitochondrion outer membrane. Functionally, in association with mitochondrial contact site and cristae organizing system (MICOS) complex components and mitochondrial outer membrane sorting assembly machinery (SAM) complex components may regulate mitochondrial dynamics playing a role in determining mitochondrial length, distribution and motility. The sequence is that of Armadillo repeat-containing protein 1 (ARMC1) from Pongo abelii (Sumatran orangutan).